Consider the following 214-residue polypeptide: Pyrrolidone-carboxylate peptidase (214 aa).

Catalysis depends on residues E78, C141, and H165.

This sequence belongs to the peptidase C15 family. In terms of assembly, homotetramer.

It is found in the cytoplasm. It carries out the reaction Release of an N-terminal pyroglutamyl group from a polypeptide, the second amino acid generally not being Pro.. In terms of biological role, removes 5-oxoproline from various penultimate amino acid residues except L-proline. The protein is Pyrrolidone-carboxylate peptidase of Streptococcus pneumoniae serotype 2 (strain D39 / NCTC 7466).